A 756-amino-acid polypeptide reads, in one-letter code: Ent-kaur-16-ene synthase, chloroplastic (756 aa).

4 residues coordinate Mg(2+): Asp-496, Asp-500, Asn-639, and Glu-647. The short motif at 496–500 (DDFFD) is the DDXXD motif element.

It belongs to the terpene synthase family. It depends on Mg(2+) as a cofactor. Highly expressed in panicles and at lower levels in leaves and stems.

It localises to the plastid. The protein resides in the chloroplast. The catalysed reaction is ent-copalyl diphosphate = ent-kaur-16-ene + diphosphate. It functions in the pathway plant hormone biosynthesis; gibberellin biosynthesis. Catalyzes the conversion of ent-copalyl diphosphate to the gibberellin precursor ent-kaur-16-ene. In Oryza sativa subsp. japonica (Rice), this protein is Ent-kaur-16-ene synthase, chloroplastic (KS1).